A 307-amino-acid polypeptide reads, in one-letter code: Dihydroorotate dehydrogenase B (NAD(+)), catalytic subunit (307 aa).

Residues Ser-21 and 45-46 (KA) each bind FMN. Residues Lys-45 and 69–73 (NAIGL) each bind substrate. FMN contacts are provided by Asn-101 and Asn-129. Substrate is bound at residue Asn-129. The active-site Nucleophile is Cys-132. FMN contacts are provided by Lys-167 and Ile-193. Residue 194–195 (NT) coordinates substrate. FMN-binding positions include Gly-219, 245–246 (GG), and 267–268 (GT).

The protein belongs to the dihydroorotate dehydrogenase family. Type 1 subfamily. Heterotetramer of 2 PyrK and 2 PyrD type B subunits. It depends on FMN as a cofactor.

Its subcellular location is the cytoplasm. It catalyses the reaction (S)-dihydroorotate + NAD(+) = orotate + NADH + H(+). Its pathway is pyrimidine metabolism; UMP biosynthesis via de novo pathway; orotate from (S)-dihydroorotate (NAD(+) route): step 1/1. In terms of biological role, catalyzes the conversion of dihydroorotate to orotate with NAD(+) as electron acceptor. This Cutibacterium acnes (strain DSM 16379 / KPA171202) (Propionibacterium acnes) protein is Dihydroorotate dehydrogenase B (NAD(+)), catalytic subunit (pyrD).